A 105-amino-acid chain; its full sequence is Endogenous retrovirus group K member 16 Rec protein (105 aa).

The segment at 1-41 (MNPSEMQRKAPPRRRRHRNRAPSSHKMNKMMMSEEQMKLPS) is disordered. Residues 10 to 20 (APPRRRRHRNR) are compositionally biased toward basic residues. The short motif at 13–20 (RRRRHRNR) is the Nuclear localization signal element. A Nuclear export signal motif is present at residues 50–59 (WAQLNKLTQL).

As to quaternary structure, forms homodimers, homotrimers, and homotetramers via a C-terminal domain. Associates with XPO1 and with ZNF145.

It is found in the cytoplasm. The protein localises to the nucleus. The protein resides in the nucleolus. Its function is as follows. Retroviral replication requires the nuclear export and translation of unspliced, singly-spliced and multiply-spliced derivatives of the initial genomic transcript. Rec interacts with a highly structured RNA element (RcRE) present in the viral 3'LTR and recruits the cellular nuclear export machinery. This permits export to the cytoplasm of unspliced genomic or incompletely spliced subgenomic viral transcripts. This Homo sapiens (Human) protein is Endogenous retrovirus group K member 16 Rec protein (ERVK-16).